Here is a 1203-residue protein sequence, read N- to C-terminus: Cingulin (1203 aa).

The tract at residues 7-357 is head; sequence MAEPRGPVDH…VMVSSGSTKA (351 aa). The tract at residues 25-48 is disordered; that stretch reads EPVSGAEMGTLRRGGRRPAKDARA. Residues 48–62 carry the ZIM motif; sequence ASTYGVAVRVQGIAG. The tract at residues 54–67 is interaction with TJP1/ZO1; it reads AVRVQGIAGQPFVV. The interval 89–127 is disordered; it reads GASGALSSDLELPENPYSQVKGFPAPSQSSTSDEEPGAY. Residues Ser95, Ser96, Ser135, Ser137, Ser140, Ser155, Ser165, Ser214, Ser217, Ser258, Ser276, Ser338, and Ser351 each carry the phosphoserine modification. Residues 186–266 are disordered; sequence DSQLGGQARG…LSPLSGFSRS (81 aa). Over residues 207–231 the composition is skewed to basic and acidic residues; sequence EQRKRSKSLDSRLPRDTFEERERQS. Positions 232–266 are enriched in polar residues; sequence TNHWTSSTKYDNHVGTSKQPAQSQNLSPLSGFSRS. A coiled-coil region spans residues 358–1160; it reads VAGQGELTRK…SLEKDSWRKA (803 aa). Lys579 carries the post-translational modification N6-acetyllysine. Residue Thr712 is modified to Phosphothreonine. Disordered stretches follow at residues 1034–1053 and 1154–1181; these read LASS…LESQ and KDSW…EEFD. A compositionally biased stretch (low complexity) spans 1044 to 1053; that stretch reads SASLSQLESQ. A tail region spans residues 1161–1203; the sequence is SRSAAESALKNEGLSSDEEFDSVYDPSSIASLLTESNLQTSSC. A phosphoserine mark is found at Ser1175, Ser1176, and Ser1182.

It belongs to the cingulin family. In terms of assembly, homodimer. Interacts with TJP1/ZO1. Interacts with SPEF1. In terms of tissue distribution, localized on the cytoplasmic face of tight junctions of polarized epithelia and some endothelia. Expressed in pancreas, kidney, liver and lung, but not in skeletal muscle, placenta, brain or heart.

It is found in the cell junction. Its subcellular location is the tight junction. Functionally, probably plays a role in the formation and regulation of the tight junction (TJ) paracellular permeability barrier. This is Cingulin from Homo sapiens (Human).